We begin with the raw amino-acid sequence, 368 residues long: Chaperone protein DnaJ (368 aa).

The J domain maps to 5 to 65 (DYYEVLGLTK…QKKARYDQFG (61 aa)). The CR-type zinc-finger motif lies at 125 to 207 (GKETEIEIPK…CRGEGKVQKR (83 aa)). Residues Cys138, Cys141, Cys155, Cys158, Cys181, Cys184, Cys195, and Cys198 each coordinate Zn(2+). CXXCXGXG motif repeat units lie at residues 138 to 145 (CETCHGSG), 155 to 162 (CSTCNGAG), 181 to 188 (CTTCHGTG), and 195 to 202 (CSTCRGEG).

The protein belongs to the DnaJ family. As to quaternary structure, homodimer. Requires Zn(2+) as cofactor.

Its subcellular location is the cytoplasm. Its function is as follows. Participates actively in the response to hyperosmotic and heat shock by preventing the aggregation of stress-denatured proteins and by disaggregating proteins, also in an autonomous, DnaK-independent fashion. Unfolded proteins bind initially to DnaJ; upon interaction with the DnaJ-bound protein, DnaK hydrolyzes its bound ATP, resulting in the formation of a stable complex. GrpE releases ADP from DnaK; ATP binding to DnaK triggers the release of the substrate protein, thus completing the reaction cycle. Several rounds of ATP-dependent interactions between DnaJ, DnaK and GrpE are required for fully efficient folding. Also involved, together with DnaK and GrpE, in the DNA replication of plasmids through activation of initiation proteins. The sequence is that of Chaperone protein DnaJ from Lysinibacillus sphaericus (Bacillus sphaericus).